A 172-amino-acid polypeptide reads, in one-letter code: MAAMASFGALALLLLSGLSCCSEACLEPQITPSYYTTSDAVISTETVFIVEISLTCKNRVQNMALYADVSGKQFPVTRGQDVGRYQVSWSLEHKSAHAGTYEVRFFDEESYSLLRKAQRNNEDVSIIPPLFTVSVDHRGTWNGPWVSTEVLAAVIGIVIYYLAFSAKSHIQA.

The signal sequence occupies residues 1 to 23 (MAAMASFGALALLLLSGLSCCSE). At 24–143 (ACLEPQITPS…SVDHRGTWNG (120 aa)) the chain is on the lumenal side. C25 and C56 are joined by a disulfide. A Glycyl lysine isopeptide (Lys-Gly) (interchain with G-Cter in ubiquitin) cross-link involves residue K72. The chain crosses the membrane as a helical span at residues 144–164 (PWVSTEVLAAVIGIVIYYLAF). The Cytoplasmic segment spans residues 165–172 (SAKSHIQA).

The protein belongs to the TRAP-delta family. As to quaternary structure, heterotetramer of TRAP-alpha, TRAP-beta, TRAP-delta and TRAP-gamma.

The protein localises to the endoplasmic reticulum membrane. Its function is as follows. TRAP proteins are part of a complex whose function is to bind calcium to the ER membrane and thereby regulate the retention of ER resident proteins. This chain is Translocon-associated protein subunit delta (Ssr4), found in Mus musculus (Mouse).